Reading from the N-terminus, the 433-residue chain is 3-phosphoshikimate 1-carboxyvinyltransferase (433 aa).

Positions 23, 24, and 28 each coordinate 3-phosphoshikimate. K23 is a binding site for phosphoenolpyruvate. Phosphoenolpyruvate contacts are provided by G95 and R123. Residues S167, Q169, D317, and K344 each coordinate 3-phosphoshikimate. Residue Q169 participates in phosphoenolpyruvate binding. The Proton acceptor role is filled by D317. 2 residues coordinate phosphoenolpyruvate: R348 and R390.

This sequence belongs to the EPSP synthase family. Monomer.

Its subcellular location is the cytoplasm. The enzyme catalyses 3-phosphoshikimate + phosphoenolpyruvate = 5-O-(1-carboxyvinyl)-3-phosphoshikimate + phosphate. The protein operates within metabolic intermediate biosynthesis; chorismate biosynthesis; chorismate from D-erythrose 4-phosphate and phosphoenolpyruvate: step 6/7. Catalyzes the transfer of the enolpyruvyl moiety of phosphoenolpyruvate (PEP) to the 5-hydroxyl of shikimate-3-phosphate (S3P) to produce enolpyruvyl shikimate-3-phosphate and inorganic phosphate. The sequence is that of 3-phosphoshikimate 1-carboxyvinyltransferase from Staphylococcus epidermidis (strain ATCC 35984 / DSM 28319 / BCRC 17069 / CCUG 31568 / BM 3577 / RP62A).